A 227-amino-acid polypeptide reads, in one-letter code: Cytochrome c oxidase subunit 2 (227 aa).

At 1-14 (MAYPFELGFQDATS) the chain is on the mitochondrial intermembrane side. The helical transmembrane segment at 15–45 (PIMEELLHFHDHTLMIVFLISSLVLYIISLM) threads the bilayer. Over 46–59 (LTTKLTHTSTMDAQ) the chain is Mitochondrial matrix. A helical transmembrane segment spans residues 60–87 (EVETIWTILPAIILILIALPSLRILYMM). Residues 88–227 (DEINDPSLTV…HFENWSSSML (140 aa)) lie on the Mitochondrial intermembrane side of the membrane. Cu cation-binding residues include His161, Cys196, Glu198, Cys200, His204, and Met207. Residue Glu198 participates in Mg(2+) binding.

It belongs to the cytochrome c oxidase subunit 2 family. In terms of assembly, component of the cytochrome c oxidase (complex IV, CIV), a multisubunit enzyme composed of 14 subunits. The complex is composed of a catalytic core of 3 subunits MT-CO1, MT-CO2 and MT-CO3, encoded in the mitochondrial DNA, and 11 supernumerary subunits COX4I, COX5A, COX5B, COX6A, COX6B, COX6C, COX7A, COX7B, COX7C, COX8 and NDUFA4, which are encoded in the nuclear genome. The complex exists as a monomer or a dimer and forms supercomplexes (SCs) in the inner mitochondrial membrane with NADH-ubiquinone oxidoreductase (complex I, CI) and ubiquinol-cytochrome c oxidoreductase (cytochrome b-c1 complex, complex III, CIII), resulting in different assemblies (supercomplex SCI(1)III(2)IV(1) and megacomplex MCI(2)III(2)IV(2)). Found in a complex with TMEM177, COA6, COX18, COX20, SCO1 and SCO2. Interacts with TMEM177 in a COX20-dependent manner. Interacts with COX20. Interacts with COX16. The cofactor is Cu cation.

The protein resides in the mitochondrion inner membrane. The catalysed reaction is 4 Fe(II)-[cytochrome c] + O2 + 8 H(+)(in) = 4 Fe(III)-[cytochrome c] + 2 H2O + 4 H(+)(out). Its function is as follows. Component of the cytochrome c oxidase, the last enzyme in the mitochondrial electron transport chain which drives oxidative phosphorylation. The respiratory chain contains 3 multisubunit complexes succinate dehydrogenase (complex II, CII), ubiquinol-cytochrome c oxidoreductase (cytochrome b-c1 complex, complex III, CIII) and cytochrome c oxidase (complex IV, CIV), that cooperate to transfer electrons derived from NADH and succinate to molecular oxygen, creating an electrochemical gradient over the inner membrane that drives transmembrane transport and the ATP synthase. Cytochrome c oxidase is the component of the respiratory chain that catalyzes the reduction of oxygen to water. Electrons originating from reduced cytochrome c in the intermembrane space (IMS) are transferred via the dinuclear copper A center (CU(A)) of subunit 2 and heme A of subunit 1 to the active site in subunit 1, a binuclear center (BNC) formed by heme A3 and copper B (CU(B)). The BNC reduces molecular oxygen to 2 water molecules using 4 electrons from cytochrome c in the IMS and 4 protons from the mitochondrial matrix. This chain is Cytochrome c oxidase subunit 2 (MT-CO2), found in Tamias merriami (Merriam's chipmunk).